Reading from the N-terminus, the 535-residue chain is Atrial natriuretic peptide receptor 3 (535 aa).

Residues 1-26 (MRSLLLFTFSACVLLARALLAGGASS) form the signal peptide. Positions 27 to 40 (GGGDTGPGNRRRER) are excised as a propeptide. Residues 41-477 (EALAAQKIEV…CKSCGLEESA (437 aa)) lie on the Extracellular side of the membrane. Asparagine 81 is a glycosylation site (N-linked (GlcNAc...) asparagine). 2 disulfide bridges follow: cysteine 103–cysteine 131 and cysteine 208–cysteine 256. Residues asparagine 288 and asparagine 389 are each glycosylated (N-linked (GlcNAc...) asparagine). A helical transmembrane segment spans residues 478–498 (VTGIVVGALLGAGLLMAFYFF). Residues 499–535 (RKKYRITIERRNHQEESNIGKHRELREDSIRSHFSVA) are Cytoplasmic-facing.

Belongs to the ANF receptor family. In terms of assembly, homodimer; disulfide-linked. Interacts with OSTN.

It localises to the cell membrane. In terms of biological role, receptor for the natriuretic peptide hormones, binding with similar affinities atrial natriuretic peptide NPPA/ANP, brain natriuretic peptide NPPB/BNP, and C-type natriuretic peptide NPPC/CNP. May function as a clearance receptor for NPPA, NPPB and NPPC, regulating their local concentrations and effects. Acts as a regulator of osteoblast differentiation and bone growth by binding to its ligand osteocrin, thereby preventing binding between NPR3/NPR-C and natriuretic peptides, leading to increase cGMP production. This Rattus norvegicus (Rat) protein is Atrial natriuretic peptide receptor 3 (Npr3).